The following is a 106-amino-acid chain: UPF0145 protein Tlet_1264 (106 aa).

This sequence belongs to the UPF0145 family.

This is UPF0145 protein Tlet_1264 from Pseudothermotoga lettingae (strain ATCC BAA-301 / DSM 14385 / NBRC 107922 / TMO) (Thermotoga lettingae).